We begin with the raw amino-acid sequence, 113 residues long: Protein AaeX (113 aa).

2 helical membrane passes run 3-23 and 43-63; these read LLPVMVIFGLSFPPVLFEMIL and FVWHPALFNTALYCCVFYLIS.

It belongs to the AaeX family.

Its subcellular location is the cell membrane. The sequence is that of Protein AaeX from Sodalis glossinidius (strain morsitans).